The primary structure comprises 75 residues: Large ribosomal subunit protein bL28 (75 aa).

Belongs to the bacterial ribosomal protein bL28 family.

This chain is Large ribosomal subunit protein bL28, found in Buchnera aphidicola subsp. Acyrthosiphon pisum (strain 5A).